The following is an 87-amino-acid chain: Putative membrane protein insertion efficiency factor (87 aa).

The protein belongs to the UPF0161 family.

The protein resides in the cell membrane. In terms of biological role, could be involved in insertion of integral membrane proteins into the membrane. The sequence is that of Putative membrane protein insertion efficiency factor from Streptococcus pyogenes serotype M12 (strain MGAS2096).